A 612-amino-acid polypeptide reads, in one-letter code: MIQVLLVTICLAVFPYQGSSIILESGNVNDYEVVYPRKVTALPKGAVQQKYEDAMQYEFTVNGEPVVLHLEKNKGLFSEDYSETHYSPDGREITTNPPVEDHCYYHGRIQNDADLTASISACDGLKGHFKLQGETYIIEPLKLPDSEAHAVFKYENVEKEDEAPKMCGVTQSNWESDESIKEDSQSNLTPAQQKYLNAKKYVKFFLVADHIMYLKYGRNLTTLRTRMFDTVNIVNQILQRINIHVALIGIEIWSKEDKIIVQSVPDVTLKLFATWRESVLLKRKNHDNAHLLTGINFNGPTAGLAYLGGICKPMYSAGIVQDHNKIHHLVAIAMAHEMGHNLGMDHDKDTCTCRAKACVMAGTLSCDASYLFSDCSRQEHRAFLIKNMPQCILKKPLKTDVVSPPVCGNYFVEVGEDCDCGSPATCRDPCCDAATCKLRQGAQCAEGLCCDQCRFKAAGTECRAATDECDMADLCTGRSAECTDRFQRNGQPCQNNNGYCYNRTCPTMNNQCIALFGPNAAVSQDACFQFNRQGNYYGYCRKEQNTKIACEPQNVKCGRLYCIDSSPAKKNPCNIIYSPNDEDKGMVLPGTKCADGMACNSNGQCVDVNRTY.

A signal peptide spans 1 to 20 (MIQVLLVTICLAVFPYQGSS). The propeptide occupies 21–188 (IILESGNVND…SIKEDSQSNL (168 aa)). Residues 200–396 (KYVKFFLVAD…NMPQCILKKP (197 aa)) enclose the Peptidase M12B domain. Asn-219 is a glycosylation site (N-linked (GlcNAc...) asparagine). Cystine bridges form between Cys-311-Cys-391, Cys-351-Cys-375, and Cys-353-Cys-358. His-336 serves as a coordination point for Zn(2+). Glu-337 is an active-site residue. The Zn(2+) site is built by His-340 and His-346. Residues 404 to 489 (PPVCGNYFVE…AECTDRFQRN (86 aa)) enclose the Disintegrin domain. Ca(2+) is bound by residues Val-406, Asn-409, Phe-411, Glu-413, Glu-416, and Asp-419. 14 disulfides stabilise this stretch: Cys-407-Cys-436, Cys-418-Cys-431, Cys-420-Cys-426, Cys-430-Cys-453, Cys-444-Cys-450, Cys-449-Cys-475, Cys-462-Cys-482, Cys-469-Cys-500, Cys-493-Cys-505, Cys-512-Cys-562, Cys-527-Cys-573, Cys-540-Cys-550, Cys-557-Cys-599, and Cys-593-Cys-605. The D/ECD-tripeptide signature appears at 468-470 (ECD). Residues Asp-470, Met-471, Asp-473, Asp-484, and Arg-485 each contribute to the Ca(2+) site. Asn-502 is a glycosylation site (N-linked (GlcNAc...) asparagine). N-linked (GlcNAc...) asparagine glycosylation is present at Asn-609.

Belongs to the venom metalloproteinase (M12B) family. P-III subfamily. P-IIIc sub-subfamily. In terms of assembly, homodimer; disulfide-linked. Zn(2+) is required as a cofactor. As to expression, expressed by the venom gland.

It is found in the secreted. Its activity is regulated as follows. Inhibited by EDTA and EGTA. Functionally, snake venom zinc metalloproteinase-disintegrin-like that potently activates prothrombin (F2). Does not elicit any hemorrhagic response. Barely inhibits collagen-induced platelet aggregation. Hydrolyzes the alpha-chain of fibrin and fibrinogen (FGA), without affecting the Bbeta- and gamma-chains. Induces apoptosis in cultured vascular endothelial cells. The sequence is that of Zinc metalloproteinase-disintegrin-like HV1 from Protobothrops flavoviridis (Habu).